Consider the following 630-residue polypeptide: Biosynthetic arginine decarboxylase (630 aa).

Lysine 99 is subject to N6-(pyridoxal phosphate)lysine. 281 to 291 (VDIGGGLGVDY) lines the substrate pocket.

It belongs to the Orn/Lys/Arg decarboxylase class-II family. SpeA subfamily. Requires Mg(2+) as cofactor. The cofactor is pyridoxal 5'-phosphate.

It carries out the reaction L-arginine + H(+) = agmatine + CO2. The protein operates within amine and polyamine biosynthesis; agmatine biosynthesis; agmatine from L-arginine: step 1/1. Its function is as follows. Catalyzes the biosynthesis of agmatine from arginine. The chain is Biosynthetic arginine decarboxylase from Phocaeicola vulgatus (strain ATCC 8482 / DSM 1447 / JCM 5826 / CCUG 4940 / NBRC 14291 / NCTC 11154) (Bacteroides vulgatus).